The chain runs to 213 residues: Superoxide dismutase [Fe] (213 aa).

Fe cation contacts are provided by H28, H82, D164, and H168.

Belongs to the iron/manganese superoxide dismutase family. In terms of assembly, homotetramer. It depends on Fe cation as a cofactor.

The catalysed reaction is 2 superoxide + 2 H(+) = H2O2 + O2. In terms of biological role, destroys superoxide anion radicals which are normally produced within the cells and which are toxic to biological systems. This Aquifex aeolicus (strain VF5) protein is Superoxide dismutase [Fe] (sodB).